The chain runs to 92 residues: MSKICIIAWIYGRVQGVGFRYTTQYEAKRLGLTGYAKNLDDGSVEVVACGEEGQVEKLMQWLKSGGPRSARVERVLSEPHHPSGELTDFRIR.

Residues Cys5 and Cys49 are joined by a disulfide bond. Residues 5–92 (CIIAWIYGRV…SGELTDFRIR (88 aa)) form the Acylphosphatase-like domain. Catalysis depends on residues Arg20 and Asn38.

The protein belongs to the acylphosphatase family.

It carries out the reaction an acyl phosphate + H2O = a carboxylate + phosphate + H(+). The protein is Acylphosphatase of Shigella boydii serotype 4 (strain Sb227).